Consider the following 357-residue polypeptide: Probable protein phosphatase 2C 60 (357 aa).

Residues 23–329 form the PPM-type phosphatase domain; it reads RYGLSSMQGW…DNMTMILVRF (307 aa). Residues D57, G58, D272, and D320 each contribute to the Mn(2+) site. Positions 331–357 are disordered; that stretch reads NPTPSETELKPEASQAEGNHDEPSSSN. The segment covering 348–357 has biased composition (basic and acidic residues); sequence GNHDEPSSSN.

The protein belongs to the PP2C family. The cofactor is Mg(2+). It depends on Mn(2+) as a cofactor.

It catalyses the reaction O-phospho-L-seryl-[protein] + H2O = L-seryl-[protein] + phosphate. The catalysed reaction is O-phospho-L-threonyl-[protein] + H2O = L-threonyl-[protein] + phosphate. This is Probable protein phosphatase 2C 60 from Arabidopsis thaliana (Mouse-ear cress).